The sequence spans 60 residues: Three-finger toxin MS3 (60 aa).

Disulfide bonds link Cys-3/Cys-22, Cys-15/Cys-39, Cys-41/Cys-52, and Cys-53/Cys-58.

Belongs to the three-finger toxin family. Short-chain subfamily. Type I alpha-neurotoxin sub-subfamily. Expressed by the venom gland.

The protein resides in the secreted. Produces peripheral paralysis by blocking neuromuscular transmission at the postsynaptic site. Binds to and inhibits the endogenous nicotinic acetylcholine receptors (nAChR) in human rhabdomyosarcoma TE 671 cell line with an IC(50) of 346 mM. This neurotoxin is lethal to mice by intraperitoneal injection and to zebrafish by injection at the back of the dorsolateral region. The sequence is that of Three-finger toxin MS3 from Micrurus surinamensis (Surinam coral snake).